We begin with the raw amino-acid sequence, 1357 residues long: DNA-directed RNA polymerase subunit beta (1357 aa).

This sequence belongs to the RNA polymerase beta chain family. As to quaternary structure, the RNAP catalytic core consists of 2 alpha, 1 beta, 1 beta' and 1 omega subunit. When a sigma factor is associated with the core the holoenzyme is formed, which can initiate transcription.

The enzyme catalyses RNA(n) + a ribonucleoside 5'-triphosphate = RNA(n+1) + diphosphate. DNA-dependent RNA polymerase catalyzes the transcription of DNA into RNA using the four ribonucleoside triphosphates as substrates. This is DNA-directed RNA polymerase subunit beta from Nitrosospira multiformis (strain ATCC 25196 / NCIMB 11849 / C 71).